The primary structure comprises 510 residues: Histone deacetylase 3 (510 aa).

The interval 24-338 (RRVCYFYDPE…WCYETGVALG (315 aa)) is histone deacetylase. H158 (proton donor/acceptor) is an active-site residue. Zn(2+) contacts are provided by D193, H195, and D281. The tract at residues 394 to 510 (PSVQFQERIP…ARNEPGSSPK (117 aa)) is disordered. 2 stretches are compositionally biased toward basic and acidic residues: residues 418-434 (DERH…DHKP) and 448-472 (VKRE…HKGP). Positions 485–503 (APTADANAVAVNAPGNARN) are enriched in low complexity.

Belongs to the histone deacetylase family. HD Type 1 subfamily. It depends on Zn(2+) as a cofactor. Expressed in roots.

It localises to the nucleus. The enzyme catalyses N(6)-acetyl-L-lysyl-[histone] + H2O = L-lysyl-[histone] + acetate. In terms of biological role, responsible for the deacetylation of lysine residues on the N-terminal part of the core histones (H2A, H2B, H3 and H4). Histone deacetylation gives a tag for epigenetic repression and plays an important role in transcriptional regulation, cell cycle progression and developmental events. Histone deacetylases act via the formation of large multiprotein complexes. The protein is Histone deacetylase 3 of Oryza sativa subsp. japonica (Rice).